A 431-amino-acid polypeptide reads, in one-letter code: Adenylosuccinate synthetase (431 aa).

GTP contacts are provided by residues 13–19 (GDEGKGK) and 41–43 (GHT). The active-site Proton acceptor is the Asp-14. Mg(2+) contacts are provided by Asp-14 and Gly-41. IMP is bound by residues 14 to 17 (DEGK), 39 to 42 (NAGH), Thr-130, Arg-144, Gln-225, Thr-240, and Arg-304. His-42 functions as the Proton donor in the catalytic mechanism. A substrate-binding site is contributed by 300–306 (ATTGRAR). GTP-binding positions include Arg-306, 332–334 (KLD), and 414–416 (STG).

It belongs to the adenylosuccinate synthetase family. As to quaternary structure, homodimer. Mg(2+) serves as cofactor.

It localises to the cytoplasm. It catalyses the reaction IMP + L-aspartate + GTP = N(6)-(1,2-dicarboxyethyl)-AMP + GDP + phosphate + 2 H(+). It participates in purine metabolism; AMP biosynthesis via de novo pathway; AMP from IMP: step 1/2. Plays an important role in the de novo pathway of purine nucleotide biosynthesis. Catalyzes the first committed step in the biosynthesis of AMP from IMP. The sequence is that of Adenylosuccinate synthetase from Chromohalobacter salexigens (strain ATCC BAA-138 / DSM 3043 / CIP 106854 / NCIMB 13768 / 1H11).